A 606-amino-acid polypeptide reads, in one-letter code: Melanoma-associated antigen D2 (606 aa).

The tract at residues 1–204 (MSDTSESGAG…QASGTTGGRR (204 aa)) is disordered. Residue Ser2 is modified to N-acetylserine. At Ser5 the chain carries Phosphoserine. Polar residues predominate over residues 24–37 (SSMMQTLLTVTQNV). Thr72 carries the post-translational modification Phosphothreonine. Residues 81-93 (TQASSTTQLTDTQ) show a composition bias toward polar residues. The span at 122-131 (ETKKVSHVAD) shows a compositional bias: basic and acidic residues. The span at 142–164 (EAAPSQAPADEPEPESAAAQSQE) shows a compositional bias: low complexity. The residue at position 157 (Ser157) is a Phosphoserine. Residues 171-181 (KVKAKKARKVK) show a composition bias toward basic residues. A phosphoserine mark is found at Ser190, Ser191, Ser194, Ser197, Ser244, and Ser247. Residues 248-260 (PKARRGKARRRAA) are compositionally biased toward basic residues. A disordered region spans residues 248–275 (PKARRGKARRRAAKLQSSQEPEAPPPRD). Residues Ser264 and Ser265 each carry the phosphoserine modification. The region spanning 279–478 (LQGRANDLVK…KEWAAQYREA (200 aa)) is the MAGE domain. The interval 534–563 (GAEAKAKAQESGSASTGASTSTNNSASASA) is disordered.

Interacts with GNAS. May interact with DNAJB1. Widely expressed. In the developing and adult kidney, expressed in the thick ascending limb of the loop of Henle and the distal convoluted tubules outside the loop.

Regulates the expression, localization to the plasma membrane and function of the sodium chloride cotransporters SLC12A1 and SLC12A3, two key components of salt reabsorption in the distal renal tubule. The protein is Melanoma-associated antigen D2 (MAGED2) of Homo sapiens (Human).